We begin with the raw amino-acid sequence, 159 residues long: NADH-quinone oxidoreductase subunit B (159 aa).

The [4Fe-4S] cluster site is built by Cys-37, Cys-38, Cys-102, and Cys-132.

The protein belongs to the complex I 20 kDa subunit family. As to quaternary structure, NDH-1 is composed of 14 different subunits. Subunits NuoB, C, D, E, F, and G constitute the peripheral sector of the complex. [4Fe-4S] cluster is required as a cofactor.

It localises to the cell inner membrane. It carries out the reaction a quinone + NADH + 5 H(+)(in) = a quinol + NAD(+) + 4 H(+)(out). NDH-1 shuttles electrons from NADH, via FMN and iron-sulfur (Fe-S) centers, to quinones in the respiratory chain. Couples the redox reaction to proton translocation (for every two electrons transferred, four hydrogen ions are translocated across the cytoplasmic membrane), and thus conserves the redox energy in a proton gradient. This is NADH-quinone oxidoreductase subunit B from Paraburkholderia phymatum (strain DSM 17167 / CIP 108236 / LMG 21445 / STM815) (Burkholderia phymatum).